The sequence spans 340 residues: DnaJ homolog subfamily C member 22 (340 aa).

Residues 1–50 enclose the TM2 domain; that stretch reads MGKSLLAAYGLWALGGPLGLYHIYLGRDSHALLWMLTLGGFGMGWMWDFW. 7 consecutive transmembrane segments (helical) span residues 5 to 25, 30 to 50, 81 to 101, 105 to 125, 135 to 155, 186 to 206, and 212 to 232; these read LLAA…HIYL, HALL…WDFW, FIGQ…GLSF, FHMV…ATVG, LIAA…MIPI, IGLV…LNTS, and VAGS…ISAL. The J domain maps to 278–340; that stretch reads MACKVLGVNF…LMRLRKSKTL (63 aa).

Its subcellular location is the membrane. In terms of biological role, may function as a co-chaperone. This is DnaJ homolog subfamily C member 22 (dnajc22) from Xenopus tropicalis (Western clawed frog).